The chain runs to 94 residues: Integration host factor subunit beta (94 aa).

Belongs to the bacterial histone-like protein family. Heterodimer of an alpha and a beta chain.

Its function is as follows. This protein is one of the two subunits of integration host factor, a specific DNA-binding protein that functions in genetic recombination as well as in transcriptional and translational control. This is Integration host factor subunit beta from Escherichia fergusonii (strain ATCC 35469 / DSM 13698 / CCUG 18766 / IAM 14443 / JCM 21226 / LMG 7866 / NBRC 102419 / NCTC 12128 / CDC 0568-73).